Consider the following 245-residue polypeptide: Flavin mononucleotide hydrolase 1, chloroplatic (245 aa).

The transit peptide at 1–26 directs the protein to the chloroplast; sequence MAAAAMHTSAEFINLKPNMWKKNPVR.

The protein belongs to the HAD-like hydrolase superfamily. DOG/GPP family. As to quaternary structure, homodimer. Requires Mg(2+) as cofactor.

It localises to the plastid. It is found in the chloroplast stroma. It catalyses the reaction FMN + H2O = riboflavin + phosphate. The enzyme catalyses 5-amino-6-(5-phospho-D-ribitylamino)uracil + H2O = 5-amino-6-(D-ribitylamino)uracil + phosphate. In terms of biological role, FMN hydrolase that catalyzes the dephosphorylation of flavin mononucleotide (FMN) to riboflavin. Can also dephosphorylate 5-amino-6-(5-phospho-D-ribitylamino)uracil, also known as ARPP. Not required for riboflavin biosynthesis in planta, but may help maintaining flavin homeostasis within chloroplasts. The chain is Flavin mononucleotide hydrolase 1, chloroplatic from Arabidopsis thaliana (Mouse-ear cress).